A 303-amino-acid chain; its full sequence is NmrA-like family domain-containing oxidoreductase FVEG_08287 (303 aa).

NADP(+) contacts are provided by residues 8 to 13, 8 to 14, 36 to 39, Arg-37, 56 to 57, 77 to 79, and 159 to 162; these read LGAGEL, LGAGELG, LRPS, QG, IFR, and FMSF.

Belongs to the NmrA-type oxidoreductase family.

NmrA-like family domain-containing oxidoreductase; part of the Fusarium detoxification of benzoxazolinone cluster 1 (FDB1) involved in the degradation of benzoxazolinones produced by the host plant. Maize, wheat, and rye produce the 2 benzoxazinone phytoanticipins 2,4-dihy-droxy-7-methoxy-1,4-benzoxazin-3-one (DIMBOA) and 2,4-dihydroxy-1,4-benzoxazin-3-one (DIBOA) that, due to their inherent instability once released, spontaneously degrade to the more stable corresponding benzoxazolinones, 6-methoxy-2-benzoxazolinone (MBOA) and 2-benzoxazolinone (BOA), respectively. The first step in the detoxification of benzoxazolinones involves the hydrolysis of the cyclic ester bond of benzoxazolinones by the FDB1 cluster gamma-lactamase MBL1 to aminophenols. MBL1 is able to convert BOA into 2-aminophenol (2-AP), as well as MBOA into 5-methoxy-2-aminophenol (2-AMP). The FDB2 cluster N-malonyltransferase FDB2/NAT1 then metabolizes aminophenols via N-malonylation to non-toxic malonamic acids. FDB2/NAT1 converts 2-AP into N-(2-hydroxyphenyl) malonamic acid (HPMA) and 2-AMP into N-(2-hydroxy-4-methoxyphenyl) malonamic acid (HMPMA). The duplicated dienlactone hydrolases DLH1 and DLH2 may provide redundant function for hydrolyzing the lactone moiety in the BOA molecule. The roles of the amidases an other enzymes encoded by the 2 FDB clusters have not been identified so far. This Gibberella moniliformis (strain M3125 / FGSC 7600) (Maize ear and stalk rot fungus) protein is NmrA-like family domain-containing oxidoreductase FVEG_08287.